Here is a 1064-residue protein sequence, read N- to C-terminus: Phosphatidylinositol 4,5-bisphosphate 3-kinase catalytic subunit beta isoform (1064 aa).

A PI3K-ABD domain is found at 20 to 109; that stretch reads SDGAISVDFL…LPVLKLVTRS (90 aa). One can recognise a PI3K-RBD domain in the interval 188-279; sequence GGKLVVAVHF…RTLPHFILVE (92 aa). S318 carries the phosphoserine modification. In terms of domain architecture, C2 PI3K-type spans 323–490; sequence NNNPFQITLV…NATALHITFP (168 aa). Positions 404–412 match the Nuclear localization signal (NLS) motif; the sequence is KVKTKKSTK. In terms of domain architecture, PIK helical spans 518-695; the sequence is ANVSSRGGKK…GVILEAYCRG (178 aa). Positions 766–1047 constitute a PI3K/PI4K catalytic domain; it reads YVEKCKYMDS…KFDEALRESW (282 aa). A G-loop region spans residues 772–778; sequence YMDSKMK. Positions 910-918 are catalytic loop; that stretch reads GIGDRHSDN. Positions 929–955 are activation loop; it reads HIDFGHILGNFKSKFGIKRERVPFILT. At S1064 the chain carries Phosphoserine; by autocatalysis.

This sequence belongs to the PI3/PI4-kinase family. Heterodimer of a catalytic subunit PIK3CB and a p85 regulatory subunit (PIK3R1, PIK3R2 or PIK3R3). Interaction with PIK3R2 is required for nuclear localization and nuclear export. Part of a complex with PIK3R1 and PTEN. Binding to PTEN may antagonize the lipid kinase activity under normal growth conditions. Part of a complex involved in autophagosome formation composed of PIK3C3 and PIK3R4. Interacts with BECN1, ATG14 and RAB5A. Phosphorylation at Ser-1064 down-regulates lipid kinase activity. In terms of processing, autophosphorylation at Ser-1064 negatively regulates the phosphatidylinositol-4,5-bisphosphate 3-kinase activity.

The protein resides in the cytoplasm. Its subcellular location is the nucleus. It carries out the reaction a 1,2-diacyl-sn-glycero-3-phospho-(1D-myo-inositol-4,5-bisphosphate) + ATP = a 1,2-diacyl-sn-glycero-3-phospho-(1D-myo-inositol-3,4,5-trisphosphate) + ADP + H(+). The catalysed reaction is 1-octadecanoyl-2-(5Z,8Z,11Z,14Z)-eicosatetraenoyl-sn-glycero-3-phospho-1D-myo-inositol 4,5-bisphosphate + ATP = 1-octadecanoyl-2-(5Z,8Z,11Z,14Z-eicosatetraenoyl)-sn-glycero-3-phospho-(1D-myo-inositol 3,4,5-triphosphate) + ADP + H(+). The enzyme catalyses L-seryl-[protein] + ATP = O-phospho-L-seryl-[protein] + ADP + H(+). The protein operates within phospholipid metabolism; phosphatidylinositol phosphate biosynthesis. Phosphoinositide-3-kinase (PI3K) phosphorylates phosphatidylinositol (PI) derivatives at position 3 of the inositol ring to produce 3-phosphoinositides. Uses ATP and PtdIns(4,5)P2 (phosphatidylinositol 4,5-bisphosphate) to generate phosphatidylinositol 3,4,5-trisphosphate (PIP3). PIP3 plays a key role by recruiting PH domain-containing proteins to the membrane, including AKT1 and PDPK1, activating signaling cascades involved in cell growth, survival, proliferation, motility and morphology. Involved in the activation of AKT1 upon stimulation by G-protein coupled receptors (GPCRs) ligands such as CXCL12, sphingosine 1-phosphate, and lysophosphatidic acid. May also act downstream receptor tyrosine kinases. Required in different signaling pathways for stable platelet adhesion and aggregation. Plays a role in platelet activation signaling triggered by GPCRs, alpha-IIb/beta-3 integrins (ITGA2B/ ITGB3) and ITAM (immunoreceptor tyrosine-based activation motif)-bearing receptors such as GP6. Regulates the strength of adhesion of ITGA2B/ ITGB3 activated receptors necessary for the cellular transmission of contractile forces. Required for platelet aggregation induced by F2 (thrombin) and thromboxane A2 (TXA2). Has a role in cell survival. May have a role in cell migration. Involved in the early stage of autophagosome formation. Modulates the intracellular level of PtdIns3P (phosphatidylinositol 3-phosphate) and activates PIK3C3 kinase activity. May act as a scaffold, independently of its lipid kinase activity to positively regulate autophagy. May have a role in insulin signaling as scaffolding protein in which the lipid kinase activity is not required. May have a kinase-independent function in regulating cell proliferation and in clathrin-mediated endocytosis. Mediator of oncogenic signal in cell lines lacking PTEN. The lipid kinase activity is necessary for its role in oncogenic transformation. Required for the growth of ERBB2 and RAS driven tumors. Also has a protein kinase activity showing autophosphorylation. This Mus musculus (Mouse) protein is Phosphatidylinositol 4,5-bisphosphate 3-kinase catalytic subunit beta isoform (Pik3cb).